Here is a 189-residue protein sequence, read N- to C-terminus: HGPRTase-like protein (189 aa).

This sequence belongs to the purine/pyrimidine phosphoribosyltransferase family. Archaeal HPRT subfamily.

In terms of biological role, may catalyze a purine salvage reaction, the substrate is unknown. The sequence is that of HGPRTase-like protein from Natronomonas pharaonis (strain ATCC 35678 / DSM 2160 / CIP 103997 / JCM 8858 / NBRC 14720 / NCIMB 2260 / Gabara) (Halobacterium pharaonis).